A 798-amino-acid chain; its full sequence is MFRKRNLVLDLLRRCYIETLIPRGLWSRTISTFPKSALLATDNAEMASKETGMFSLAGELASLVEESSSHVDDDSKPRSRMELKRSLELRLKKRVKEQCINGKFSDLLKKVIARPETLRDAYDCIRLNSNVSITERNGSVAFDSIAEELSSGVFDVASNTFSIVARDKTKEVLVLPSVALKVVQEAIRIVLEVVFSPHFSKISHSCRSGRGRASALKYINNNISRSDWCFTLSLNKKLDVSVFENLLSVMEEKVEDSSLSILLRSMFEARVLNLEFGGFPKGHGLPQEGVLSRVLMNIYLDRFDHEFYRISMRHEALGLDSKTDEDSPGSKLRSWFRRQAGEQGLKSTTEQDVALRVYCCRFMDEIYFSVSGPKKVASDIRSEAIGFLRNSLHLDITDETDPSPCEATSGLRVLGTLVRKNVRESPTVKAVHKLKEKVRLFALQKEEAWTLGTVRIGKKWLGHGLKKVKESEIKGLADSNSTLSQISCHRKAGMETDHWYKILLRIWMEDVLRTSADRSEEFVLSKHVVEPTVPQELRDAFYKFQNAAAAYVSSETANLEALLPCPQSHDRPVFFGDVVAPTNAIGRRLYRYGLITAKGYARSNSMLILLDTAQIIDWYSGLVRRWVIWYEGCSNFDEIKALIDNQIRMSCIRTLAAKYRIHENEIEKRLDLELSTIPSAEDIEQEIQHEKLDSPAFDRDEHLTYGLSNSGLCLLSLARLVSESRPCNCFVIGCSMAAPAVYTLHAMERQKFPGWKTGFSVCIPSSLNGRRIGLCKQHLKDLYIGQISLQAVDFGAWR.

A mitochondrion-targeting transit peptide spans 1–16 (MFRKRNLVLDLLRRCY). Residues 578-665 (VVAPTNAIGR…AAKYRIHENE (88 aa)) are intron maturase type-2. A THAP-type zinc finger spans residues 729-778 (CFVIGCSMAAPAVYTLHAMERQKFPGWKTGFSVCIPSSLNGRRIGLCKQH).

The protein belongs to the plant nuclear intron maturase (nMat) family.

It localises to the mitochondrion. The protein resides in the plastid. It is found in the chloroplast. Functionally, nuclear-encoded maturase required for splicing of group-II introns in mitochondria. Involved in NAD1 pre-mRNA processing and maturation of introns 1, 3 and 4. Necessary for mitochondrial biogenesis during early developmental stages. Essential for respiratory holocomplex I biogenesis in mitochondria. This Arabidopsis thaliana (Mouse-ear cress) protein is Nuclear intron maturase 4, mitochondrial.